The following is a 258-amino-acid chain: UPF0246 protein YaaA (258 aa).

Belongs to the UPF0246 family.

The protein is UPF0246 protein YaaA of Shigella dysenteriae serotype 1 (strain Sd197).